The chain runs to 507 residues: ATP synthase subunit alpha, chloroplastic (507 aa).

An ATP-binding site is contributed by 170–177; the sequence is GDRQTGKT. Thr257 bears the Phosphothreonine mark.

It belongs to the ATPase alpha/beta chains family. As to quaternary structure, F-type ATPases have 2 components, CF(1) - the catalytic core - and CF(0) - the membrane proton channel. CF(1) has five subunits: alpha(3), beta(3), gamma(1), delta(1), epsilon(1). CF(0) has four main subunits: a, b, b' and c.

The protein localises to the plastid. The protein resides in the chloroplast thylakoid membrane. The enzyme catalyses ATP + H2O + 4 H(+)(in) = ADP + phosphate + 5 H(+)(out). In terms of biological role, produces ATP from ADP in the presence of a proton gradient across the membrane. The alpha chain is a regulatory subunit. This is ATP synthase subunit alpha, chloroplastic from Arabis hirsuta (Hairy rock-cress).